Here is a 394-residue protein sequence, read N- to C-terminus: Fatty acid resistance protein FarA (394 aa).

Positions 1–23 (MKSGNSEPNLMETHTDETKLQNT) are disordered. Residues 33-53 (ALTLLFALSAAAAGSAFFLWW) traverse the membrane as a helical segment. Residues 356 to 376 (SAAGAPVSKTPGAALPEMEST) form a disordered region.

This sequence belongs to the membrane fusion protein (MFP) (TC 8.A.1) family. As to quaternary structure, probably part of a tripartite efflux system FarAB-MtrE, which is composed of an inner membrane transporter, FarB, a periplasmic membrane fusion protein, FarA, and an outer membrane component, MtrE.

The protein resides in the cell inner membrane. Functionally, mediates resistance to long-chained antibacterial fatty acids (FAs). Function is dependent on the MtrE outer membrane protein. This Neisseria gonorrhoeae protein is Fatty acid resistance protein FarA.